Here is a 356-residue protein sequence, read N- to C-terminus: Methylthioribose-1-phosphate isomerase (356 aa).

D234 acts as the Proton donor in catalysis.

This sequence belongs to the eIF-2B alpha/beta/delta subunits family. MtnA subfamily.

The protein localises to the cytoplasm. The protein resides in the nucleus. The catalysed reaction is 5-(methylsulfanyl)-alpha-D-ribose 1-phosphate = 5-(methylsulfanyl)-D-ribulose 1-phosphate. It functions in the pathway amino-acid biosynthesis; L-methionine biosynthesis via salvage pathway; L-methionine from S-methyl-5-thio-alpha-D-ribose 1-phosphate: step 1/6. Catalyzes the interconversion of methylthioribose-1-phosphate (MTR-1-P) into methylthioribulose-1-phosphate (MTRu-1-P). The protein is Methylthioribose-1-phosphate isomerase (mri1) of Schizosaccharomyces japonicus (strain yFS275 / FY16936) (Fission yeast).